A 375-amino-acid chain; its full sequence is MKFELDTTDGRARRGRLVFDRGVVETPCFMPVGTYGTVKGMTPEEVEATGAQIILGNTFHLWLRPGQEIMKLHGDLHDFMQWKGPILTDSGGFQVFSLGDIRKITEQGVHFRNPINGDPIFLDPEKSMEIQYDLGSDIVMIFDECTPYPADWDYAKRSMEMSLRWAKRSRERFDSLGNKNALFGIIQGSIYEDLRDISVKGLVDIGFDGYAVGGLAVGEPKADMHRILEHVCPQIPADKPRYLMGVGKPEDLVEGVRRGIDMFDCVMPTRNARNGHLFVTDGVVKIRNAKYKSDTGPLDPECDCYTCRNYSRAYLHHLDRCNEILGARLNTIHNLRYYQRLMAGLRKAIEEGKLESFVTDFYQRQGREVPPLNVD.

Aspartate 89 functions as the Proton acceptor in the catalytic mechanism. Residues 89 to 93, aspartate 143, glutamine 187, and glycine 214 each bind substrate; that span reads DSGGF. Positions 245–251 are RNA binding; the sequence is GVGKPED. The active-site Nucleophile is the aspartate 264. The interval 269-273 is RNA binding; important for wobble base 34 recognition; it reads TRNAR. 4 residues coordinate Zn(2+): cysteine 302, cysteine 304, cysteine 307, and histidine 333.

The protein belongs to the queuine tRNA-ribosyltransferase family. In terms of assembly, homodimer. Within each dimer, one monomer is responsible for RNA recognition and catalysis, while the other monomer binds to the replacement base PreQ1. Requires Zn(2+) as cofactor.

It carries out the reaction 7-aminomethyl-7-carbaguanine + guanosine(34) in tRNA = 7-aminomethyl-7-carbaguanosine(34) in tRNA + guanine. The protein operates within tRNA modification; tRNA-queuosine biosynthesis. In terms of biological role, catalyzes the base-exchange of a guanine (G) residue with the queuine precursor 7-aminomethyl-7-deazaguanine (PreQ1) at position 34 (anticodon wobble position) in tRNAs with GU(N) anticodons (tRNA-Asp, -Asn, -His and -Tyr). Catalysis occurs through a double-displacement mechanism. The nucleophile active site attacks the C1' of nucleotide 34 to detach the guanine base from the RNA, forming a covalent enzyme-RNA intermediate. The proton acceptor active site deprotonates the incoming PreQ1, allowing a nucleophilic attack on the C1' of the ribose to form the product. After dissociation, two additional enzymatic reactions on the tRNA convert PreQ1 to queuine (Q), resulting in the hypermodified nucleoside queuosine (7-(((4,5-cis-dihydroxy-2-cyclopenten-1-yl)amino)methyl)-7-deazaguanosine). This chain is Queuine tRNA-ribosyltransferase, found in Shigella flexneri serotype 5b (strain 8401).